The chain runs to 243 residues: I/6 autoantigen (243 aa).

The region spanning 110–145 (LSVEEVDALFNALDSDNRGYVSVDEFMDALYGEEGR) is the EF-hand domain. Residues 166 to 243 (PSWRMRPTPK…PPKQKAGCGC (78 aa)) are disordered. Residues 176–196 (PTRKLRQKRKREQGQKRKQGQ) are compositionally biased toward basic residues. 6 consecutive repeat copies span residues 181 to 188 (RQKRKREQ), 189 to 196 (GQKRKQGQ), 197 to 204 (RQKQEQGQ), 205 to 212 (RQKREQGQ), 213 to 220 (RQKQEQGQ), and 221 to 228 (KRKRERGG). The 6 X 8 AA tandem repeats stretch occupies residues 181–228 (RQKRKREQGQKRKQGQRQKQEQGQRQKREQGQRQKQEQGQKRKRERGG). A compositionally biased stretch (basic and acidic residues) spans 198 to 220 (QKQEQGQRQKREQGQRQKQEQGQ).

It is found in the cytoplasm. The protein localises to the cytoskeleton. In terms of biological role, microtubule-associated protein that may be involved in cross-linking microtubules. The polypeptide is I/6 autoantigen (Trypanosoma brucei brucei).